Here is a 372-residue protein sequence, read N- to C-terminus: MALNDFHVSEPYTLGIELEMQVINPPGYDLSQDSSTLIDAVKPQLTAGEIKHDITESMLEMATGVCRDIDQAAAQLSAMQHVILQAASEHHLGICGGGTHPFQKWQRQEVCDNERYQRTLENFGYLIQQATVFGQHVHVGCANGDDAIYLLHGLSHFVPHFIALSAASPYMQGADTRFACARLNIFSAFPDNGPMPWVSNWQEFAGLFRRLSYTTMIDSIKDLHWDIRPSPAFGTVEVRVMDTPLTLDHAINMAGLIQATAHWLLTERPFKPQEQDYLLYKFNRFQACRYGLEGVLTDAYTGDRRRLADDTLRLLDNVTPSARKLGADSAIDALRLQVKKGGNEAQYMREFIADGGSLIGLVQKHCEIWAGQ.

Belongs to the glutamate--cysteine ligase type 2 family. YbdK subfamily. As to quaternary structure, homodimer.

The enzyme catalyses L-cysteine + L-glutamate + ATP = gamma-L-glutamyl-L-cysteine + ADP + phosphate + H(+). ATP-dependent carboxylate-amine ligase which exhibits weak glutamate--cysteine ligase activity. The chain is Putative glutamate--cysteine ligase 2 (ybdK) from Salmonella typhimurium (strain LT2 / SGSC1412 / ATCC 700720).